The following is a 173-amino-acid chain: Translation initiation factor IF-3 (173 aa).

This sequence belongs to the IF-3 family. As to quaternary structure, monomer.

It is found in the cytoplasm. In terms of biological role, IF-3 binds to the 30S ribosomal subunit and shifts the equilibrium between 70S ribosomes and their 50S and 30S subunits in favor of the free subunits, thus enhancing the availability of 30S subunits on which protein synthesis initiation begins. This is Translation initiation factor IF-3 from Enterococcus faecalis (strain ATCC 700802 / V583).